The primary structure comprises 489 residues: Glutamate--tRNA ligase (489 aa).

A 'HIGH' region motif is present at residues 12 to 22 (PSPTGIPHVGM). The short motif at 256-260 (KLSKR) is the 'KMSKS' region element. ATP is bound at residue lysine 259.

The protein belongs to the class-I aminoacyl-tRNA synthetase family. Glutamate--tRNA ligase type 1 subfamily. Monomer.

The protein resides in the cytoplasm. It catalyses the reaction tRNA(Glu) + L-glutamate + ATP = L-glutamyl-tRNA(Glu) + AMP + diphosphate. Its function is as follows. Catalyzes the attachment of glutamate to tRNA(Glu) in a two-step reaction: glutamate is first activated by ATP to form Glu-AMP and then transferred to the acceptor end of tRNA(Glu). This is Glutamate--tRNA ligase from Mycobacterium ulcerans (strain Agy99).